The primary structure comprises 483 residues: Trimethylamine methyltransferase MttB (483 aa).

Residue pyrrolysine 334 is a non-standard amino acid, pyrrolysine.

The protein belongs to the trimethylamine methyltransferase family. Can form a complex with MttC.

It catalyses the reaction Co(I)-[trimethylamine-specific corrinoid protein] + trimethylamine + H(+) = methyl-Co(III)-[trimethylamine-specific corrinoid protein] + dimethylamine. It functions in the pathway one-carbon metabolism; methanogenesis from trimethylamine. In terms of biological role, catalyzes the transfer of a methyl group from trimethylamine to the corrinoid cofactor of MttC. The protein is Trimethylamine methyltransferase MttB (mttB) of Methanosarcina thermophila.